Consider the following 636-residue polypeptide: Methyl-CpG-binding domain protein 1 (636 aa).

An MBD domain is found at methionine 1–leucine 69. A disordered region spans residues lysine 75 to glutamine 113. A compositionally biased stretch (basic residues) spans serine 83–lysine 97. The Nuclear localization signal motif lies at lysine 84–lysine 88. Residue lysine 117 forms a Glycyl lysine isopeptide (Lys-Gly) (interchain with G-Cter in SUMO2) linkage. CXXC-type zinc fingers lie at residues arginine 187–leucine 234 and arginine 235–phenylalanine 281. Positions 194, 197, 200, 206, 209, 212, 228, 233, 243, 246, 249, 255, 258, 261, 275, and 280 each coordinate Zn(2+). A disordered region spans residues glycine 291–threonine 314. Lysine 293 is covalently cross-linked (Glycyl lysine isopeptide (Lys-Gly) (interchain with G-Cter in SUMO2)). The segment at threonine 348 to leucine 396 adopts a CXXC-type 3 zinc-finger fold. 8 residues coordinate Zn(2+): cysteine 356, cysteine 359, cysteine 362, cysteine 368, cysteine 371, cysteine 374, cysteine 390, and cysteine 395. The disordered stretch occupies residues alanine 407 to aspartate 474. Phosphoserine is present on serine 409. Residues lysine 443 and lysine 461 each participate in a glycyl lysine isopeptide (Lys-Gly) (interchain with G-Cter in SUMO2) cross-link. Glycyl lysine isopeptide (Lys-Gly) (interchain with G-Cter in SUMO2); alternate cross-links involve residues lysine 520 and lysine 559. The tract at residues glutamine 543 to glycine 589 is disordered. Residues alanine 550–proline 612 form a transcriptional repression domain (TRD) region.

In terms of assembly, interacts with OASL, ATF7IP, ATF7IP2 and BAHD1. Binds CHAF1A and the SUV39H1-CBX5 complex via the MBD domain. Binds MGP via the TRD domain. May be part of the MeCP1 complex. During DNA replication, it recruits SETDB1 to form a S phase-specific complex that facilitates methylation of H3 'Lys-9' during replication-coupled chromatin assembly and is at least composed of the CAF-1 subunit CHAF1A, MBD1 and SETDB1. Interacts with the Ten-1 ICD form of TENM1. In terms of processing, sumoylated, sumoylation may increase interaction with ATF7IP. As to expression, highly expressed in kidney, liver and brain. Detected at lower levels in heart, lung, skeletal muscle, spleen and testis.

It localises to the nucleus. Its subcellular location is the nucleus matrix. The protein localises to the nucleus speckle. It is found in the chromosome. Functionally, transcriptional repressor that binds CpG islands in promoters where the DNA is methylated at position 5 of cytosine within CpG dinucleotides. Binding is abolished by the presence of 7-mG that is produced by DNA damage by methylmethanesulfonate (MMS). Acts as transcriptional repressor and plays a role in gene silencing by recruiting ATF7IP, which in turn recruits factors such as the histone methyltransferase SETDB1. Probably forms a complex with SETDB1 and ATF7IP that represses transcription and couples DNA methylation and histone 'Lys-9' trimethylation. Isoform 1 can also repress transcription from unmethylated promoters. The sequence is that of Methyl-CpG-binding domain protein 1 from Mus musculus (Mouse).